We begin with the raw amino-acid sequence, 446 residues long: Chromosomal replication initiator protein DnaA (446 aa).

The interval 1–92 (MENISDLWNS…SQAEEEIDLP (92 aa)) is domain I, interacts with DnaA modulators. The tract at residues 87-107 (EEIDLPPSKPNSAQDDSNHLP) is disordered. The interval 93-109 (PSKPNSAQDDSNHLPQS) is domain II. Polar residues predominate over residues 96 to 107 (PNSAQDDSNHLP). The segment at 110 to 326 (MLNPKYTFDT…GALIRVVAYS (217 aa)) is domain III, AAA+ region. ATP-binding residues include G154, G156, K157, and T158. The tract at residues 327–446 (SLINKDINAD…QVEEINDILK (120 aa)) is domain IV, binds dsDNA.

The protein belongs to the DnaA family. As to quaternary structure, oligomerizes as a right-handed, spiral filament on DNA at oriC.

The protein resides in the cytoplasm. Plays an essential role in the initiation and regulation of chromosomal replication. ATP-DnaA binds to the origin of replication (oriC) to initiate formation of the DNA replication initiation complex once per cell cycle. Binds the DnaA box (a 9 base pair repeat at the origin) and separates the double-stranded (ds)DNA. Forms a right-handed helical filament on oriC DNA; dsDNA binds to the exterior of the filament while single-stranded (ss)DNA is stabiized in the filament's interior. The ATP-DnaA-oriC complex binds and stabilizes one strand of the AT-rich DNA unwinding element (DUE), permitting loading of DNA polymerase. After initiation quickly degrades to an ADP-DnaA complex that is not apt for DNA replication. Binds acidic phospholipids. The sequence is that of Chromosomal replication initiator protein DnaA from Bacillus cereus (strain ATCC 10987 / NRS 248).